A 101-amino-acid polypeptide reads, in one-letter code: Putative pterin-4-alpha-carbinolamine dehydratase (101 aa).

It belongs to the pterin-4-alpha-carbinolamine dehydratase family.

It catalyses the reaction (4aS,6R)-4a-hydroxy-L-erythro-5,6,7,8-tetrahydrobiopterin = (6R)-L-erythro-6,7-dihydrobiopterin + H2O. The sequence is that of Putative pterin-4-alpha-carbinolamine dehydratase from Nitrobacter winogradskyi (strain ATCC 25391 / DSM 10237 / CIP 104748 / NCIMB 11846 / Nb-255).